The following is a 352-amino-acid chain: Lipase chaperone (352 aa).

The helical transmembrane segment at 7 to 28 threads the bilayer; the sequence is LSLVAVVVAGGLTLYWRWPAAV.

This sequence belongs to the lipase chaperone family.

Its subcellular location is the cell inner membrane. Its function is as follows. May be involved in the folding of the extracellular lipase during its passage through the periplasm. This Pseudomonas wisconsinensis protein is Lipase chaperone (lifO).